Consider the following 322-residue polypeptide: Transaldolase (322 aa).

Lys136 (schiff-base intermediate with substrate) is an active-site residue.

Belongs to the transaldolase family. Type 1 subfamily. Homodimer.

The protein resides in the cytoplasm. The catalysed reaction is D-sedoheptulose 7-phosphate + D-glyceraldehyde 3-phosphate = D-erythrose 4-phosphate + beta-D-fructose 6-phosphate. It participates in carbohydrate degradation; pentose phosphate pathway; D-glyceraldehyde 3-phosphate and beta-D-fructose 6-phosphate from D-ribose 5-phosphate and D-xylulose 5-phosphate (non-oxidative stage): step 2/3. Transaldolase is important for the balance of metabolites in the pentose-phosphate pathway. This is Transaldolase from Xanthomonas oryzae pv. oryzae (strain KACC10331 / KXO85).